The sequence spans 261 residues: Probable trans-aconitate 2-methyltransferase (261 aa).

The protein belongs to the methyltransferase superfamily. Tam family.

The protein localises to the cytoplasm. The catalysed reaction is trans-aconitate + S-adenosyl-L-methionine = (E)-3-(methoxycarbonyl)pent-2-enedioate + S-adenosyl-L-homocysteine. Its function is as follows. Catalyzes the S-adenosylmethionine monomethyl esterification of trans-aconitate. This is Probable trans-aconitate 2-methyltransferase from Mycobacterium bovis (strain ATCC BAA-935 / AF2122/97).